The chain runs to 492 residues: Glutamyl-tRNA(Gln) amidotransferase subunit A (492 aa).

Residues K84 and S159 each act as charge relay system in the active site. The active-site Acyl-ester intermediate is S183.

The protein belongs to the amidase family. GatA subfamily. As to quaternary structure, heterotrimer of A, B and C subunits.

It catalyses the reaction L-glutamyl-tRNA(Gln) + L-glutamine + ATP + H2O = L-glutaminyl-tRNA(Gln) + L-glutamate + ADP + phosphate + H(+). Allows the formation of correctly charged Gln-tRNA(Gln) through the transamidation of misacylated Glu-tRNA(Gln) in organisms which lack glutaminyl-tRNA synthetase. The reaction takes place in the presence of glutamine and ATP through an activated gamma-phospho-Glu-tRNA(Gln). The chain is Glutamyl-tRNA(Gln) amidotransferase subunit A from Anaeromyxobacter dehalogenans (strain 2CP-C).